A 460-amino-acid polypeptide reads, in one-letter code: Bifunctional protein GlmU (460 aa).

A pyrophosphorylase region spans residues 1-229 (MTNYAIILAA…FNESLGVNDR (229 aa)). Residues 8–11 (LAAG), lysine 22, glutamine 72, and 77–78 (GT) contribute to the UDP-N-acetyl-alpha-D-glucosamine site. Position 102 (aspartate 102) interacts with Mg(2+). Residues glycine 139, glutamate 154, asparagine 169, and asparagine 227 each coordinate UDP-N-acetyl-alpha-D-glucosamine. Residue asparagine 227 coordinates Mg(2+). The segment at 230 to 250 (VALATAETVMRQRITQKHMVN) is linker. An N-acetyltransferase region spans residues 251 to 460 (GVTFHNPETV…RLAHHPSRSK (210 aa)). 2 residues coordinate UDP-N-acetyl-alpha-D-glucosamine: arginine 332 and lysine 350. The active-site Proton acceptor is histidine 362. UDP-N-acetyl-alpha-D-glucosamine contacts are provided by tyrosine 365 and asparagine 376. Residues alanine 379, 385–386 (NY), serine 404, alanine 422, and arginine 439 each bind acetyl-CoA.

In the N-terminal section; belongs to the N-acetylglucosamine-1-phosphate uridyltransferase family. The protein in the C-terminal section; belongs to the transferase hexapeptide repeat family. Homotrimer. Mg(2+) serves as cofactor.

It localises to the cytoplasm. It carries out the reaction alpha-D-glucosamine 1-phosphate + acetyl-CoA = N-acetyl-alpha-D-glucosamine 1-phosphate + CoA + H(+). The enzyme catalyses N-acetyl-alpha-D-glucosamine 1-phosphate + UTP + H(+) = UDP-N-acetyl-alpha-D-glucosamine + diphosphate. The protein operates within nucleotide-sugar biosynthesis; UDP-N-acetyl-alpha-D-glucosamine biosynthesis; N-acetyl-alpha-D-glucosamine 1-phosphate from alpha-D-glucosamine 6-phosphate (route II): step 2/2. Its pathway is nucleotide-sugar biosynthesis; UDP-N-acetyl-alpha-D-glucosamine biosynthesis; UDP-N-acetyl-alpha-D-glucosamine from N-acetyl-alpha-D-glucosamine 1-phosphate: step 1/1. It functions in the pathway bacterial outer membrane biogenesis; LPS lipid A biosynthesis. In terms of biological role, catalyzes the last two sequential reactions in the de novo biosynthetic pathway for UDP-N-acetylglucosamine (UDP-GlcNAc). The C-terminal domain catalyzes the transfer of acetyl group from acetyl coenzyme A to glucosamine-1-phosphate (GlcN-1-P) to produce N-acetylglucosamine-1-phosphate (GlcNAc-1-P), which is converted into UDP-GlcNAc by the transfer of uridine 5-monophosphate (from uridine 5-triphosphate), a reaction catalyzed by the N-terminal domain. The sequence is that of Bifunctional protein GlmU from Streptococcus pyogenes serotype M49 (strain NZ131).